Reading from the N-terminus, the 466-residue chain is Trigger factor (466 aa).

In terms of domain architecture, PPIase FKBP-type spans 162–243 (GDVVSIDLSA…VRSVKERELP (82 aa)). The disordered stretch occupies residues 428–466 (GNTIDTSEFFGKRVSAGEAEEAEPADEGAARAASDEATT). Over residues 457-466 (ARAASDEATT) the composition is skewed to low complexity.

It belongs to the FKBP-type PPIase family. Tig subfamily.

It is found in the cytoplasm. The enzyme catalyses [protein]-peptidylproline (omega=180) = [protein]-peptidylproline (omega=0). Its function is as follows. Involved in protein export. Acts as a chaperone by maintaining the newly synthesized protein in an open conformation. Functions as a peptidyl-prolyl cis-trans isomerase. The polypeptide is Trigger factor (Mycobacterium bovis (strain BCG / Tokyo 172 / ATCC 35737 / TMC 1019)).